Reading from the N-terminus, the 357-residue chain is UDP-N-acetylglucosamine--N-acetylmuramyl-(pentapeptide) pyrophosphoryl-undecaprenol N-acetylglucosamine transferase (357 aa).

UDP-N-acetyl-alpha-D-glucosamine is bound by residues threonine 12–glycine 14, asparagine 124, arginine 163, serine 189, isoleucine 243, alanine 262–glutamate 267, and glutamine 288.

This sequence belongs to the glycosyltransferase 28 family. MurG subfamily.

It is found in the cell inner membrane. The catalysed reaction is di-trans,octa-cis-undecaprenyl diphospho-N-acetyl-alpha-D-muramoyl-L-alanyl-D-glutamyl-meso-2,6-diaminopimeloyl-D-alanyl-D-alanine + UDP-N-acetyl-alpha-D-glucosamine = di-trans,octa-cis-undecaprenyl diphospho-[N-acetyl-alpha-D-glucosaminyl-(1-&gt;4)]-N-acetyl-alpha-D-muramoyl-L-alanyl-D-glutamyl-meso-2,6-diaminopimeloyl-D-alanyl-D-alanine + UDP + H(+). It functions in the pathway cell wall biogenesis; peptidoglycan biosynthesis. Cell wall formation. Catalyzes the transfer of a GlcNAc subunit on undecaprenyl-pyrophosphoryl-MurNAc-pentapeptide (lipid intermediate I) to form undecaprenyl-pyrophosphoryl-MurNAc-(pentapeptide)GlcNAc (lipid intermediate II). In Pseudomonas aeruginosa (strain LESB58), this protein is UDP-N-acetylglucosamine--N-acetylmuramyl-(pentapeptide) pyrophosphoryl-undecaprenol N-acetylglucosamine transferase.